The chain runs to 619 residues: ATP-dependent DNA helicase RecQ (619 aa).

The 169-residue stretch at 37–205 (INAALNGQDA…LRHLNLKNLH (169 aa)) folds into the Helicase ATP-binding domain. ATP is bound at residue 50-57 (MATGNGKS). The DEAH box signature appears at 149-152 (DEAH). The Helicase C-terminal domain occupies 229-374 (QLTRFVLAQK…QIEQHKLEAI (146 aa)). Zn(2+) contacts are provided by C383, C400, C403, and C406. The region spanning 535 to 615 (ANYDKDLFAR…QEHKAILANA (81 aa)) is the HRDC domain.

It belongs to the helicase family. RecQ subfamily. Mg(2+) serves as cofactor. Zn(2+) is required as a cofactor.

It carries out the reaction Couples ATP hydrolysis with the unwinding of duplex DNA by translocating in the 3'-5' direction.. It catalyses the reaction ATP + H2O = ADP + phosphate + H(+). In terms of biological role, an ATP-dependent DNA helicase which unwinds DNA in a 3'-5' direction. Plays a role in recombination. This chain is ATP-dependent DNA helicase RecQ, found in Haemophilus influenzae (strain ATCC 51907 / DSM 11121 / KW20 / Rd).